The following is a 1208-amino-acid chain: Putative protease AXL1 (1208 aa).

His-68 contacts Zn(2+). Glu-71 functions as the Proton acceptor in the catalytic mechanism. Zn(2+) contacts are provided by His-72 and Glu-156. Ser-262 carries the post-translational modification Phosphoserine.

It belongs to the peptidase M16 family. As to quaternary structure, interacts with BUD5. Requires Zn(2+) as cofactor.

The protein resides in the bud neck. Its function is as follows. Probable protease. Involved in axial budding. This Saccharomyces cerevisiae (strain ATCC 204508 / S288c) (Baker's yeast) protein is Putative protease AXL1 (AXL1).